Here is a 208-residue protein sequence, read N- to C-terminus: Ectodysplasin-A receptor-associated adapter protein (208 aa).

A compositionally biased stretch (basic and acidic residues) spans M1 to V18. The segment at M1–S99 is disordered. Residues T49–Q61 show a composition bias toward polar residues. In terms of domain architecture, Death spans D116–E195.

Binds EDAR. Self-associates and binds TRAF1, TRAF2 and TRAF3.

It localises to the cytoplasm. Its function is as follows. Adapter protein that interacts with EDAR DEATH domain and couples the receptor to EDA signaling pathway during morphogenesis of ectodermal organs. Mediates the activation of NF-kappa-B. In Mus musculus (Mouse), this protein is Ectodysplasin-A receptor-associated adapter protein (Edaradd).